Here is a 517-residue protein sequence, read N- to C-terminus: Crotonobetaine/carnitine--CoA ligase (517 aa).

The protein belongs to the ATP-dependent AMP-binding enzyme family.

It catalyses the reaction 4-(trimethylamino)butanoate + ATP + CoA = 4-(trimethylamino)butanoyl-CoA + AMP + diphosphate. It carries out the reaction crotonobetaine + ATP + CoA = crotonobetainyl-CoA + AMP + diphosphate. The catalysed reaction is (R)-carnitine + ATP + CoA = (R)-carnitinyl-CoA + AMP + diphosphate. It participates in amine and polyamine metabolism; carnitine metabolism. In terms of biological role, catalyzes the transfer of CoA to carnitine, generating the initial carnitinyl-CoA needed for the CaiB reaction cycle. Also has activity toward crotonobetaine and gamma-butyrobetaine. The polypeptide is Crotonobetaine/carnitine--CoA ligase (Salmonella paratyphi B (strain ATCC BAA-1250 / SPB7)).